The chain runs to 351 residues: S-adenosylmethionine:tRNA ribosyltransferase-isomerase (351 aa).

It belongs to the QueA family. Monomer.

Its subcellular location is the cytoplasm. It catalyses the reaction 7-aminomethyl-7-carbaguanosine(34) in tRNA + S-adenosyl-L-methionine = epoxyqueuosine(34) in tRNA + adenine + L-methionine + 2 H(+). Its pathway is tRNA modification; tRNA-queuosine biosynthesis. Its function is as follows. Transfers and isomerizes the ribose moiety from AdoMet to the 7-aminomethyl group of 7-deazaguanine (preQ1-tRNA) to give epoxyqueuosine (oQ-tRNA). The chain is S-adenosylmethionine:tRNA ribosyltransferase-isomerase from Roseobacter denitrificans (strain ATCC 33942 / OCh 114) (Erythrobacter sp. (strain OCh 114)).